The following is a 358-amino-acid chain: Protein Wnt-8 (358 aa).

The N-terminal stretch at 1–22 (MQNTTLFILATLLIFCPFFTAS) is a signal peptide. An intrachain disulfide couples cysteine 55 to cysteine 66. The N-linked (GlcNAc...) asparagine glycan is linked to asparagine 104. Cystine bridges form between cysteine 105/cysteine 113, cysteine 115/cysteine 133, cysteine 181/cysteine 195, cysteine 183/cysteine 190, cysteine 260/cysteine 298, cysteine 276/cysteine 291, cysteine 295/cysteine 337, cysteine 313/cysteine 328, cysteine 315/cysteine 325, and cysteine 320/cysteine 321. Serine 187 carries the O-palmitoleoyl serine lipid modification. N-linked (GlcNAc...) asparagine glycans are attached at residues asparagine 263 and asparagine 282.

It belongs to the Wnt family. As to quaternary structure, homooligomer; disulfide-linked, leading to inactivation. Interacts with the long chain of cer1. Palmitoleoylation is required for efficient binding to frizzled receptors. Depalmitoleoylation leads to Wnt signaling pathway inhibition. Post-translationally, proteolytic processing by tiki1 and tiki2 promotes oxidation and formation of large disulfide-bond oligomers, leading to inactivation of wnt8.

The protein localises to the secreted. It localises to the extracellular space. It is found in the extracellular matrix. In terms of biological role, ligand for members of the frizzled family of seven transmembrane receptors. Plays a role in ventral mesodermal patterning during embryogenesis. Mimics Nieuwkoop center activity. Causes dorsal mesodermal differentiation of animal cap ectoderm when coexpressed with noggin and nuclear, sequence-specific DNA-binding protein xBra. None of these molecules causes dorsal mesoderm formation when expressed alone. This chain is Protein Wnt-8 (wnt8), found in Xenopus laevis (African clawed frog).